The primary structure comprises 194 residues: Imidazoleglycerol-phosphate dehydratase (194 aa).

Belongs to the imidazoleglycerol-phosphate dehydratase family.

It is found in the cytoplasm. The enzyme catalyses D-erythro-1-(imidazol-4-yl)glycerol 3-phosphate = 3-(imidazol-4-yl)-2-oxopropyl phosphate + H2O. Its pathway is amino-acid biosynthesis; L-histidine biosynthesis; L-histidine from 5-phospho-alpha-D-ribose 1-diphosphate: step 6/9. This Bacillus cereus (strain AH820) protein is Imidazoleglycerol-phosphate dehydratase.